A 115-amino-acid polypeptide reads, in one-letter code: Chondroitin proteoglycan 8 (115 aa).

The first 16 residues, 1–16 (MRPFILLALLVSVTVA), serve as a signal peptide directing secretion. Positions 33–96 (VRRTTRDASD…GSGAAEVTSV (64 aa)) are disordered. Residues Ser-61, Ser-63, Ser-84, Ser-88, and Ser-109 are each glycosylated (O-linked (Xyl...) (chondroitin sulfate) serine).

This chain is Chondroitin proteoglycan 8, found in Caenorhabditis elegans.